A 662-amino-acid polypeptide reads, in one-letter code: UvrABC system protein B (662 aa).

The Helicase ATP-binding domain occupies 31-188 (DNIEGGEKAQ…NDLVDIQFER (158 aa)). 44–51 (GATGTGKT) is an ATP binding site. The Beta-hairpin motif lies at 97–120 (YYDYYQPEAYVPSSDTYIEKDSSV). A Helicase C-terminal domain is found at 435–601 (QIDDLLGEIN…TIKKEIRDLI (167 aa)). The region spanning 626–661 (KDMIKKLEGQMQEAAGLLDFELAAQIRDMILEIKAM) is the UVR domain.

It belongs to the UvrB family. In terms of assembly, forms a heterotetramer with UvrA during the search for lesions. Interacts with UvrC in an incision complex.

It localises to the cytoplasm. Its function is as follows. The UvrABC repair system catalyzes the recognition and processing of DNA lesions. A damage recognition complex composed of 2 UvrA and 2 UvrB subunits scans DNA for abnormalities. Upon binding of the UvrA(2)B(2) complex to a putative damaged site, the DNA wraps around one UvrB monomer. DNA wrap is dependent on ATP binding by UvrB and probably causes local melting of the DNA helix, facilitating insertion of UvrB beta-hairpin between the DNA strands. Then UvrB probes one DNA strand for the presence of a lesion. If a lesion is found the UvrA subunits dissociate and the UvrB-DNA preincision complex is formed. This complex is subsequently bound by UvrC and the second UvrB is released. If no lesion is found, the DNA wraps around the other UvrB subunit that will check the other stand for damage. This chain is UvrABC system protein B, found in Streptococcus gordonii (strain Challis / ATCC 35105 / BCRC 15272 / CH1 / DL1 / V288).